The following is a 217-amino-acid chain: MKLNIAYPTNGTQKMFEIERRNEVRLYDKKIGDQFDGGILGEEFEGTIMEITGGDDYQGFPMVSGHLTKKRVRPLLSKGDAGYRCRRKGVRRRKSVRGSIVSEEICVLNLIILRPGEKEIDGLTNAVNDVSHLPRKEKKLRKMFGVPDEEKNVVGYIRNILKSECDDPKKIPKIRHNGKRMKREQERREQIMKIRLERKRILEEERKEYLEKYFNKA.

Belongs to the eukaryotic ribosomal protein eS6 family. Phosphorylated.

This Encephalitozoon cuniculi (strain GB-M1) (Microsporidian parasite) protein is Small ribosomal subunit protein eS6 (RPS6).